The primary structure comprises 541 residues: EH domain-containing protein 4 (541 aa).

The residue at position 1 (methionine 1) is an N-acetylmethionine. A Dynamin-type G domain is found at 58–289; that stretch reads FENKPMILLV…DLFRDIQSLP (232 aa). A G1 motif region spans residues 68-75; that stretch reads GQYSTGKT. 68–75 is an ATP binding site; that stretch reads GQYSTGKT. The G2 motif stretch occupies residues 94–95; it reads EP. A G3 motif region spans residues 156-159; sequence DSPG. At serine 162 the chain carries Phosphoserine. Positions 222 to 225 are G4 motif; that stretch reads NKAD. Residue lysine 223 participates in ATP binding. Position 246 (valine 246) is a region of interest, G5 motif. Tryptophan 261 lines the ATP pocket. One can recognise an EH domain in the interval 447-535; that stretch reads DKPVYDELFY…PHLVPPSHRK (89 aa). Tyrosine 451 carries the post-translational modification Phosphotyrosine. Residue serine 459 is modified to Phosphoserine. The 36-residue stretch at 479–514 folds into the EF-hand domain; sequence LPNSVLGKIWKLADCDCDGMLDEEEFALAKHLIKIK. Positions 492, 494, 496, 498, and 503 each coordinate Ca(2+).

Belongs to the TRAFAC class dynamin-like GTPase superfamily. Dynamin/Fzo/YdjA family. EHD subfamily. In terms of assembly, homooligomer, and heterooligomer with EHD1, EHD2 and EHD3. Forms a complex with EHD4 and MICALL1; the complex controls CDH5 trafficking and coordinates angiogenesis. As to expression, highly expressed in pancreas and heart.

It is found in the early endosome membrane. Its subcellular location is the recycling endosome membrane. The protein localises to the cell membrane. It localises to the cell junction. The protein resides in the adherens junction. ATP- and membrane-binding protein that probably controls membrane reorganization/tubulation upon ATP hydrolysis. Plays a role in early endosomal transport. During sprouting angiogenesis, in complex with PACSIN2 and MICALL1, forms recycling endosome-like tubular structure at asymmetric adherens junctions to control CDH5 trafficking. This Homo sapiens (Human) protein is EH domain-containing protein 4.